A 62-amino-acid polypeptide reads, in one-letter code: Phyllokinin-1 (62 aa).

A signal peptide spans 1–19 (MSFLKKSLFLVLFLGLVSS). A propeptide spanning residues 20 to 48 (SICEEEKRETEEEENEDEIEEESEEKKRE) is cleaved from the precursor. The interval 22–62 (CEEEKRETEEEENEDEIEEESEEKKREDPERPPGFTPFRVY) is disordered. Residues 30–42 (EEEENEDEIEEES) are compositionally biased toward acidic residues. Basic and acidic residues predominate over residues 43–52 (EEKKREDPER). Tyr62 carries the sulfotyrosine; partial modification.

The protein belongs to the frog skin active peptide (FSAP) family. Bradykinin-related peptide subfamily. In terms of processing, asp,Pro,Glu-[Thr6,Val10]-phyllokinin and [Thr6,Val10]-phyllokinin occur in sulfated and nonsulfated forms. [Thr6]-bradykinin and Des-Arg-[Thr6]-bradykinin are nonsulfated. Expressed by the skin glands.

The protein resides in the secreted. In terms of biological role, inhibits ACE with a Ki of 1.6 uM, and targets B2 bradykinin receptor (BDKRB2). Provokes contraction of smooth muscle preparation (ileum). In vivo, induces an early hyperalgesic effects in living rats after intraplantar injection. This chain is Phyllokinin-1, found in Pithecopus azureus (Orange-legged monkey tree frog).